Consider the following 783-residue polypeptide: Isoamylase 1, chloroplastic (783 aa).

The N-terminal 43 residues, 1 to 43 (MDAIKCSSSFLHHTKLNTLFSNHTFPKISAPNFKPLFRPISIS), are a transit peptide targeting the chloroplast. The active-site Nucleophile is the Asp-410. Glu-466 serves as the catalytic Proton donor.

The protein belongs to the glycosyl hydrolase 13 family. Associates with ISA2 to form the heteromultimeric complex Iso1 required for amylopectin synthesis.

It localises to the plastid. Its subcellular location is the chloroplast. The enzyme catalyses Hydrolysis of (1-&gt;6)-alpha-D-glucosidic branch linkages in glycogen, amylopectin and their beta-limit dextrins.. Its pathway is glycan biosynthesis; starch biosynthesis. Functionally, involved in the trimming of pre-amylopectin chains. Accelerates the crystallization of nascent amylopectin molecules during starch synthesis. ISA1 and ISA2 work exclusively together as a multimeric holoenzyme. ISA1-ISA2 removes preferentially branches that are very close to other branches. Promotes negative gravitropic responses in shoots by facilitating starch granules (statoliths) formation in hypocotyls. In Arabidopsis thaliana (Mouse-ear cress), this protein is Isoamylase 1, chloroplastic.